The sequence spans 34 residues: Photosystem II reaction center protein Psb30 (34 aa).

Residues 6 to 26 (VVFQLMALFFVLAAGPAVVVL) traverse the membrane as a helical segment.

This sequence belongs to the Psb30/Ycf12 family. In terms of assembly, PSII is composed of 1 copy each of membrane proteins PsbA, PsbB, PsbC, PsbD, PsbE, PsbF, PsbH, PsbI, PsbJ, PsbK, PsbL, PsbM, PsbT, PsbX, PsbY, PsbZ, Psb30/Ycf12, peripheral proteins of the oxygen-evolving complex and a large number of cofactors. It forms dimeric complexes.

It localises to the plastid. It is found in the chloroplast thylakoid membrane. A core subunit of photosystem II (PSII), probably helps stabilize the reaction center. The polypeptide is Photosystem II reaction center protein Psb30 (Stigeoclonium helveticum (Green alga)).